Here is a 43-residue protein sequence, read N- to C-terminus: CLAVATA3/ESR (CLE)-related protein 16D10 (43 aa).

The first 30 residues, 1-30, serve as a signal peptide directing secretion; sequence MFTNSIKNLIIYLMPLMVTLMLLSVSFVDA. A CLE motif is present at residues 31 to 43; that stretch reads GKKPSGPNPGGNN.

The protein belongs to the CLV3/ESR signal peptide family. Highly expressed exclusively within the subventral esophageal gland cell during syncytium formation in host plants.

The protein localises to the secreted. The protein resides in the host cytoplasm. It is found in the host extracellular space. Plays a role in the differentiation or division of feeding cells (syncytia) induced in plant roots during infection. Promotes host root growth. In Meloidogyne arenaria (Peanut root-knot nematode), this protein is CLAVATA3/ESR (CLE)-related protein 16D10 (16D10).